Reading from the N-terminus, the 346-residue chain is Ribosomal RNA small subunit methyltransferase H (346 aa).

S-adenosyl-L-methionine contacts are provided by residues 47 to 49 (GGY), Asp-65, Phe-92, Asp-113, and Gln-120. The span at 270-279 (RGEAPSRRLP) shows a compositional bias: basic and acidic residues. Positions 270-346 (RGEAPSRRLP…ALPQRAAKGR (77 aa)) are disordered.

It belongs to the methyltransferase superfamily. RsmH family.

Its subcellular location is the cytoplasm. The catalysed reaction is cytidine(1402) in 16S rRNA + S-adenosyl-L-methionine = N(4)-methylcytidine(1402) in 16S rRNA + S-adenosyl-L-homocysteine + H(+). Its function is as follows. Specifically methylates the N4 position of cytidine in position 1402 (C1402) of 16S rRNA. In Methylocella silvestris (strain DSM 15510 / CIP 108128 / LMG 27833 / NCIMB 13906 / BL2), this protein is Ribosomal RNA small subunit methyltransferase H.